A 170-amino-acid polypeptide reads, in one-letter code: Putative 4-hydroxy-4-methyl-2-oxoglutarate aldolase (170 aa).

Substrate-binding positions include glycine 81–isoleucine 84 and arginine 103. Aspartate 104 serves as a coordination point for a divalent metal cation.

This sequence belongs to the class II aldolase/RraA-like family. Homotrimer. Requires a divalent metal cation as cofactor.

It catalyses the reaction 4-hydroxy-4-methyl-2-oxoglutarate = 2 pyruvate. The catalysed reaction is oxaloacetate + H(+) = pyruvate + CO2. In terms of biological role, catalyzes the aldol cleavage of 4-hydroxy-4-methyl-2-oxoglutarate (HMG) into 2 molecules of pyruvate. Also contains a secondary oxaloacetate (OAA) decarboxylase activity due to the common pyruvate enolate transition state formed following C-C bond cleavage in the retro-aldol and decarboxylation reactions. This chain is Putative 4-hydroxy-4-methyl-2-oxoglutarate aldolase, found in Corynebacterium efficiens (strain DSM 44549 / YS-314 / AJ 12310 / JCM 11189 / NBRC 100395).